Consider the following 82-residue polypeptide: DNA-directed RNA polymerase subunit omega (82 aa).

The protein belongs to the RNA polymerase subunit omega family. As to quaternary structure, the RNAP catalytic core consists of 2 alpha, 1 beta, 1 beta' and 1 omega subunit. When a sigma factor is associated with the core the holoenzyme is formed, which can initiate transcription.

The catalysed reaction is RNA(n) + a ribonucleoside 5'-triphosphate = RNA(n+1) + diphosphate. Its function is as follows. Promotes RNA polymerase assembly. Latches the N- and C-terminal regions of the beta' subunit thereby facilitating its interaction with the beta and alpha subunits. The sequence is that of DNA-directed RNA polymerase subunit omega from Lachnoclostridium phytofermentans (strain ATCC 700394 / DSM 18823 / ISDg) (Clostridium phytofermentans).